The chain runs to 299 residues: GTPase Era (299 aa).

In terms of domain architecture, Era-type G spans 8 to 176 (RCGYVAIVGR…EKLVGERLPE (169 aa)). The G1 stretch occupies residues 16–23 (GRPNVGKS). A GTP-binding site is contributed by 16–23 (GRPNVGKS). The interval 42-46 (QTTRH) is G2. The tract at residues 63–66 (DTPG) is G3. Residues 63-67 (DTPGL) and 125-128 (NKAD) each bind GTP. Residues 125-128 (NKAD) form a G4 region. The segment at 155-157 (ISA) is G5. A KH type-2 domain is found at 199–283 (IREKIMRQLG…MLNLWVKVKG (85 aa)).

This sequence belongs to the TRAFAC class TrmE-Era-EngA-EngB-Septin-like GTPase superfamily. Era GTPase family. Monomer.

It localises to the cytoplasm. The protein localises to the cell inner membrane. Functionally, an essential GTPase that binds both GDP and GTP, with rapid nucleotide exchange. Plays a role in 16S rRNA processing and 30S ribosomal subunit biogenesis and possibly also in cell cycle regulation and energy metabolism. The sequence is that of GTPase Era from Ectopseudomonas mendocina (strain ymp) (Pseudomonas mendocina).